Reading from the N-terminus, the 94-residue chain is Large ribosomal subunit protein bL25 (94 aa).

The protein belongs to the bacterial ribosomal protein bL25 family. Part of the 50S ribosomal subunit; part of the 5S rRNA/L5/L18/L25 subcomplex. Contacts the 5S rRNA. Binds to the 5S rRNA independently of L5 and L18.

Functionally, this is one of the proteins that binds to the 5S RNA in the ribosome where it forms part of the central protuberance. The sequence is that of Large ribosomal subunit protein bL25 from Erwinia tasmaniensis (strain DSM 17950 / CFBP 7177 / CIP 109463 / NCPPB 4357 / Et1/99).